The chain runs to 195 residues: NADH-quinone oxidoreductase subunit C (195 aa).

Belongs to the complex I 30 kDa subunit family. NDH-1 is composed of 14 different subunits. Subunits NuoB, C, D, E, F, and G constitute the peripheral sector of the complex.

It localises to the cell inner membrane. It carries out the reaction a quinone + NADH + 5 H(+)(in) = a quinol + NAD(+) + 4 H(+)(out). NDH-1 shuttles electrons from NADH, via FMN and iron-sulfur (Fe-S) centers, to quinones in the respiratory chain. The immediate electron acceptor for the enzyme in this species is believed to be ubiquinone. Couples the redox reaction to proton translocation (for every two electrons transferred, four hydrogen ions are translocated across the cytoplasmic membrane), and thus conserves the redox energy in a proton gradient. This chain is NADH-quinone oxidoreductase subunit C, found in Laribacter hongkongensis (strain HLHK9).